The primary structure comprises 121 residues: NADPH-dependent 7-cyano-7-deazaguanine reductase (121 aa).

C36 (thioimide intermediate) is an active-site residue. Catalysis depends on D43, which acts as the Proton donor. Residues 58–60 and 77–78 contribute to the substrate site; these read VEL and YE.

The protein belongs to the GTP cyclohydrolase I family. QueF type 1 subfamily.

It is found in the cytoplasm. It carries out the reaction 7-aminomethyl-7-carbaguanine + 2 NADP(+) = 7-cyano-7-deazaguanine + 2 NADPH + 3 H(+). It participates in tRNA modification; tRNA-queuosine biosynthesis. Functionally, catalyzes the NADPH-dependent reduction of 7-cyano-7-deazaguanine (preQ0) to 7-aminomethyl-7-deazaguanine (preQ1). The polypeptide is NADPH-dependent 7-cyano-7-deazaguanine reductase (Rhodopirellula baltica (strain DSM 10527 / NCIMB 13988 / SH1)).